The sequence spans 151 residues: UPF0102 protein Ava_4800 (151 aa).

This sequence belongs to the UPF0102 family.

The chain is UPF0102 protein Ava_4800 from Trichormus variabilis (strain ATCC 29413 / PCC 7937) (Anabaena variabilis).